A 349-amino-acid polypeptide reads, in one-letter code: MATATLSIDLDAIAANWRALDRASNRRVATGAVVKADGYGLDAGRVARTLAQAGARQFFVAVAEEGVTLRKALGPGPAINVFSGHMEGDTQAIAGARLTPMINSAEQLARHFEALPRHPFGIQLDTGMNRLGMEADEWAAVAEFALGQGPKLVMSHLACADEPGHAANAAQLAEFHRLTDGITVPRSLSATGGILLGEAYHFDMTRPGIGLYGGAPFGAAEPVVRLSIPVVQVRAVTAGESVGYGCSWVAQSDGAIATLSAGYADGLIRAMSNRAMLYAGDVACPLAGRVSMDLLTVDVSHLDEVPEALDLLCPAQGVDRLAEAAGTIGYEILTSLGPRYARHYAGGVA.

Catalysis depends on K35, which acts as the Proton acceptor; specific for D-alanine. K35 is modified (N6-(pyridoxal phosphate)lysine). R130 serves as a coordination point for substrate. Residue Y244 is the Proton acceptor; specific for L-alanine of the active site. M292 is a substrate binding site.

It belongs to the alanine racemase family. Pyridoxal 5'-phosphate serves as cofactor.

The enzyme catalyses L-alanine = D-alanine. It functions in the pathway amino-acid biosynthesis; D-alanine biosynthesis; D-alanine from L-alanine: step 1/1. In terms of biological role, catalyzes the interconversion of L-alanine and D-alanine. May also act on other amino acids. The protein is Alanine racemase (alr) of Dinoroseobacter shibae (strain DSM 16493 / NCIMB 14021 / DFL 12).